A 178-amino-acid chain; its full sequence is Caveolin-1 (178 aa).

Ser2 carries the post-translational modification N-acetylserine. Ser2 is subject to Phosphoserine. Residues 2-94 (SGGKYVDSEG…WKASFTTFTV (93 aa)) form a required for homooligomerization region. The Cytoplasmic portion of the chain corresponds to 2-104 (SGGKYVDSEG…TKYWFYRLLS (103 aa)). Position 5 is an N6-acetyllysine; alternate (Lys5). A Glycyl lysine isopeptide (Lys-Gly) (interchain with G-Cter in ubiquitin); alternate cross-link involves residue Lys5. Position 6 is a phosphotyrosine (Tyr6). Ser9 carries the phosphoserine modification. Residue Tyr14 is modified to Phosphotyrosine; by ABL1. Tyr25 is subject to Phosphotyrosine. Residues Lys26, Lys30, Lys39, Lys47, and Lys57 each participate in a glycyl lysine isopeptide (Lys-Gly) (interchain with G-Cter in ubiquitin) cross-link. An interaction with CAVIN3 region spans residues 82–94 (DGIWKASFTTFTV). Positions 105–125 (GIFGIPMALIWGVYFAILSFL) form an intramembrane region, helical. The Cytoplasmic portion of the chain corresponds to 126–178 (HIWAVVPCIKSFLIEIQCISRVYSIYVHTFCDPLFEAIGKIFSNIRISTQKEI). Residues 131 to 142 (VPCIKSFLIEIQ) are interacts with SPRY1, SPRY2, SPRY3 and SPRY4. Residues Cys133, Cys143, and Cys156 are each lipidated (S-palmitoyl cysteine). Residues 149 to 160 (SIYVHTFCDPLF) form an interacts with SPRY1, SPRY2, and SPRY4 region. An interacts with SPRY1, SPRY2, SPRY3 and SPRY4 region spans residues 167–178 (FSNIRISTQKEI).

Belongs to the caveolin family. In terms of assembly, homooligomer. Interacts with GLIPR2. Interacts with NOSTRIN. Interacts with SNAP25 and STX1A. Interacts (via the N-terminus) with DPP4; the interaction is direct. Interacts with CTNNB1, CDH1 and JUP. Interacts with PACSIN2; this interaction induces membrane tubulation. Interacts with SLC7A9. Interacts with BMX and BTK. Interacts with TGFBR1. Interacts with CAVIN3 (via leucine-zipper domain) in a cholesterol-sensitive manner. Interacts with CAVIN1. Interacts with EHD2 in a cholesterol-dependent manner. Forms a ternary complex with UBXN6 and VCP; mediates CAV1 targeting to lysosomes for degradation. Interacts with ABCG1; this interaction regulates ABCG1-mediated cholesterol efflux. Interacts with NEU3; this interaction enhances NEU3 sialidase activity within caveola. Interacts (via C-terminus) with SPRY1, SPRY2 (via C-terminus), SPRY3, and SPRY4. Interacts with IGFBP5; this interaction allows trafficking of IGFBP5 from the plasma membrane to the nucleus. Post-translationally, phosphorylated at Tyr-14 by ABL1 in response to oxidative stress. Ubiquitinated. Undergo monoubiquitination and multi- and/or polyubiquitination. Monoubiquitination of N-terminal lysines promotes integration in a ternary complex with UBXN6 and VCP which promotes oligomeric CAV1 targeting to lysosomes for degradation. Ubiquitinated by ZNRF1; leading to degradation and modulation of the TLR4-mediated immune response.

The protein resides in the golgi apparatus membrane. It localises to the cell membrane. The protein localises to the membrane. Its subcellular location is the caveola. It is found in the membrane raft. Functionally, may act as a scaffolding protein within caveolar membranes. Forms a stable heterooligomeric complex with CAV2 that targets to lipid rafts and drives caveolae formation. Mediates the recruitment of CAVIN proteins (CAVIN1/2/3/4) to the caveolae. Interacts directly with G-protein alpha subunits and can functionally regulate their activity. Involved in the costimulatory signal essential for T-cell receptor (TCR)-mediated T-cell activation. Its binding to DPP4 induces T-cell proliferation and NF-kappa-B activation in a T-cell receptor/CD3-dependent manner. Recruits CTNNB1 to caveolar membranes and may regulate CTNNB1-mediated signaling through the Wnt pathway. Negatively regulates TGFB1-mediated activation of SMAD2/3 by mediating the internalization of TGFBR1 from membrane rafts leading to its subsequent degradation. Binds 20(S)-hydroxycholesterol (20(S)-OHC). This is Caveolin-1 (CAV1) from Echinops telfairi (Lesser hedgehog tenrec).